The chain runs to 799 residues: Homeobox protein engrailed (799 aa).

4 disordered regions span residues 189-331, 369-444, 554-664, and 678-705; these read LPSR…DATK, GNFL…SLRQ, HPFL…DKAK, and SDRPSSGPRSRKPKRSKAQDEKRPRTAF. The segment covering 210-222 has biased composition (polar residues); the sequence is QSPSTSIRSNLVS. Composition is skewed to basic and acidic residues over residues 228–239 and 246–256; these read SRRDDQETSDSC and RAINDSERYDV. Polar residues-rich tracts occupy residues 284–299 and 377–401; these read LNLTTTGGDSVSQLFH and HTFQPNEDHQTVSSAQTTPRFSSPD. The segment covering 416–431 has biased composition (low complexity); the sequence is ESLSSPSSSSSSSRSS. Basic and acidic residues-rich tracts occupy residues 608-619 and 629-648; these read DQKKRSRDESAS and VHLKENSQKSDPVLKQEKGN. Residues 698–757 constitute a DNA-binding region (homeobox); sequence EKRPRTAFTNDQLQRLKREFDECRYLTETRRKNLADELGLTESQIKIWFQNKRAKIKKSV.

It belongs to the engrailed homeobox family. Expressed in the dorsal ectoderm of early gastrulae in a band corresponding to the peripheral area of the presumptive shell gland. Also expressed at four points along the posterior ectoderm. In late gastrulae, it is predominantly expressed in the peripheral ectoderm of the shell gland and in spots at the posterior end behind the presumptive foot. Expressed in late trochophore larvae at four points behind the foot, at two locations at the base of the foot and in the peripheral ectoderm of the shell gland.

It is found in the nucleus. Its function is as follows. May be involved in shell and shell gland formation during development. This is Homeobox protein engrailed from Lymnaea stagnalis (Great pond snail).